A 367-amino-acid polypeptide reads, in one-letter code: Porin Omp2a (367 aa).

Positions 1 to 22 (MNIKSLLLGSAAALVAASGAQA) are cleaved as a signal peptide.

It belongs to the alphaproteobacteria porin family. As to quaternary structure, monomer.

It is found in the cell outer membrane. Functionally, forms passive diffusion pores that allow small molecular weight hydrophilic materials across the outer membrane. The protein is Porin Omp2a (omp2a) of Brucella suis.